A 238-amino-acid chain; its full sequence is Ion-translocating oxidoreductase complex subunit E (238 aa).

Helical transmembrane passes span 41-61, 71-91, 95-115, 130-150, and 184-204; these read LGLG…VSLV, LPAF…LMQA, ELYQ…VILG, SFDG…LGGL, and GFLL…LIAL.

The protein belongs to the NqrDE/RnfAE family. The complex is composed of six subunits: RnfA, RnfB, RnfC, RnfD, RnfE and RnfG.

The protein resides in the cell inner membrane. Functionally, part of a membrane-bound complex that couples electron transfer with translocation of ions across the membrane. The polypeptide is Ion-translocating oxidoreductase complex subunit E (Pseudomonas aeruginosa (strain LESB58)).